The primary structure comprises 243 residues: Adenosine 5'-phosphosulfate reductase (243 aa).

Residues Cys126, Cys127, Cys209, and Cys212 each coordinate [4Fe-4S] cluster. Residue Cys235 is the Nucleophile; cysteine thiosulfonate intermediate of the active site.

The protein belongs to the PAPS reductase family. CysH subfamily. Requires [4Fe-4S] cluster as cofactor.

It localises to the cytoplasm. The enzyme catalyses [thioredoxin]-disulfide + sulfite + AMP + 2 H(+) = adenosine 5'-phosphosulfate + [thioredoxin]-dithiol. It participates in sulfur metabolism; hydrogen sulfide biosynthesis; sulfite from sulfate. Catalyzes the formation of sulfite from adenosine 5'-phosphosulfate (APS) using thioredoxin as an electron donor. The protein is Adenosine 5'-phosphosulfate reductase of Staphylococcus epidermidis (strain ATCC 35984 / DSM 28319 / BCRC 17069 / CCUG 31568 / BM 3577 / RP62A).